Reading from the N-terminus, the 852-residue chain is Protein mono-ADP-ribosyltransferase PARP8 (852 aa).

Disordered stretches follow at residues 113-134 (NGEESRQNSTVEEDSEGDNDSE) and 289-310 (SPSYPPPGCGKSKSKLKPEQDG). Residues 123 to 134 (VEEDSEGDNDSE) are compositionally biased toward acidic residues. 4 positions are modified to ADP-ribosylcysteine: C332, C366, C375, and C394. The PARP catalytic domain occupies 615-842 (EMTQAPYLEI…QEGGIHKEIL (228 aa)). The disordered stretch occupies residues 748–775 (QKVSSKDEPASSSKSSNASQSQKKGQQS). The span at 757–775 (ASSSKSSNASQSQKKGQQS) shows a compositional bias: low complexity.

The protein belongs to the ARTD/PARP family. Post-translationally, auto-mono-ADP-ribosylated.

The catalysed reaction is L-cysteinyl-[protein] + NAD(+) = S-(ADP-D-ribosyl)-L-cysteinyl-[protein] + nicotinamide + H(+). Mono-ADP-ribosyltransferase that mediates mono-ADP-ribosylation of target proteins. In Mus musculus (Mouse), this protein is Protein mono-ADP-ribosyltransferase PARP8.